We begin with the raw amino-acid sequence, 285 residues long: Probable endonuclease 4 (285 aa).

9 residues coordinate Zn(2+): His-69, His-109, Glu-145, Asp-179, His-182, His-216, Asp-229, His-231, and Glu-261.

This sequence belongs to the AP endonuclease 2 family. It depends on Zn(2+) as a cofactor.

The enzyme catalyses Endonucleolytic cleavage to 5'-phosphooligonucleotide end-products.. Functionally, endonuclease IV plays a role in DNA repair. It cleaves phosphodiester bonds at apurinic or apyrimidinic (AP) sites, generating a 3'-hydroxyl group and a 5'-terminal sugar phosphate. This Escherichia fergusonii (strain ATCC 35469 / DSM 13698 / CCUG 18766 / IAM 14443 / JCM 21226 / LMG 7866 / NBRC 102419 / NCTC 12128 / CDC 0568-73) protein is Probable endonuclease 4.